Consider the following 323-residue polypeptide: Malate dehydrogenase (323 aa).

NAD(+) contacts are provided by residues glycine 20–glycine 25 and aspartate 44. Substrate is bound by residues arginine 93 and arginine 99. NAD(+) is bound by residues asparagine 106 and valine 129–asparagine 131. Asparagine 131 and arginine 162 together coordinate substrate. Histidine 186 serves as the catalytic Proton acceptor.

This sequence belongs to the LDH/MDH superfamily. MDH type 3 family.

The catalysed reaction is (S)-malate + NAD(+) = oxaloacetate + NADH + H(+). Catalyzes the reversible oxidation of malate to oxaloacetate. In Nostoc sp. (strain PCC 7120 / SAG 25.82 / UTEX 2576), this protein is Malate dehydrogenase.